Consider the following 416-residue polypeptide: Gamma-glutamyl phosphate reductase (416 aa).

It belongs to the gamma-glutamyl phosphate reductase family.

It localises to the cytoplasm. It carries out the reaction L-glutamate 5-semialdehyde + phosphate + NADP(+) = L-glutamyl 5-phosphate + NADPH + H(+). Its pathway is amino-acid biosynthesis; L-proline biosynthesis; L-glutamate 5-semialdehyde from L-glutamate: step 2/2. Functionally, catalyzes the NADPH-dependent reduction of L-glutamate 5-phosphate into L-glutamate 5-semialdehyde and phosphate. The product spontaneously undergoes cyclization to form 1-pyrroline-5-carboxylate. This Streptococcus thermophilus (strain ATCC BAA-491 / LMD-9) protein is Gamma-glutamyl phosphate reductase.